Reading from the N-terminus, the 173-residue chain is Bifunctional protein PyrR (173 aa).

Residues 93–105 (IILIDDVLYTGRT) carry the PRPP-binding motif.

Belongs to the purine/pyrimidine phosphoribosyltransferase family. PyrR subfamily. In terms of assembly, homodimer and homohexamer; in equilibrium.

It catalyses the reaction UMP + diphosphate = 5-phospho-alpha-D-ribose 1-diphosphate + uracil. In terms of biological role, regulates transcriptional attenuation of the pyrimidine nucleotide (pyr) operon by binding in a uridine-dependent manner to specific sites on pyr mRNA. This disrupts an antiterminator hairpin in the RNA and favors formation of a downstream transcription terminator, leading to a reduced expression of downstream genes. Also displays a weak uracil phosphoribosyltransferase activity which is not physiologically significant. The polypeptide is Bifunctional protein PyrR (Streptococcus agalactiae serotype Ia (strain ATCC 27591 / A909 / CDC SS700)).